The sequence spans 942 residues: Isoleucine--tRNA ligase (942 aa).

The 'HIGH' region signature appears at 58–68 (PYANGDIHIGH). Glu-566 is a binding site for L-isoleucyl-5'-AMP. Residues 607 to 611 (KMSKS) carry the 'KMSKS' region motif. Lys-610 serves as a coordination point for ATP. Zn(2+) is bound by residues Cys-905, Cys-908, Cys-925, and Cys-928.

It belongs to the class-I aminoacyl-tRNA synthetase family. IleS type 1 subfamily. As to quaternary structure, monomer. Zn(2+) is required as a cofactor.

The protein localises to the cytoplasm. The catalysed reaction is tRNA(Ile) + L-isoleucine + ATP = L-isoleucyl-tRNA(Ile) + AMP + diphosphate. Functionally, catalyzes the attachment of isoleucine to tRNA(Ile). As IleRS can inadvertently accommodate and process structurally similar amino acids such as valine, to avoid such errors it has two additional distinct tRNA(Ile)-dependent editing activities. One activity is designated as 'pretransfer' editing and involves the hydrolysis of activated Val-AMP. The other activity is designated 'posttransfer' editing and involves deacylation of mischarged Val-tRNA(Ile). In Vibrio campbellii (strain ATCC BAA-1116), this protein is Isoleucine--tRNA ligase.